The following is a 258-amino-acid chain: Imidazole glycerol phosphate synthase subunit HisF (258 aa).

Residues D12 and D131 contribute to the active site.

This sequence belongs to the HisA/HisF family. In terms of assembly, heterodimer of HisH and HisF.

Its subcellular location is the cytoplasm. It catalyses the reaction 5-[(5-phospho-1-deoxy-D-ribulos-1-ylimino)methylamino]-1-(5-phospho-beta-D-ribosyl)imidazole-4-carboxamide + L-glutamine = D-erythro-1-(imidazol-4-yl)glycerol 3-phosphate + 5-amino-1-(5-phospho-beta-D-ribosyl)imidazole-4-carboxamide + L-glutamate + H(+). It participates in amino-acid biosynthesis; L-histidine biosynthesis; L-histidine from 5-phospho-alpha-D-ribose 1-diphosphate: step 5/9. Functionally, IGPS catalyzes the conversion of PRFAR and glutamine to IGP, AICAR and glutamate. The HisF subunit catalyzes the cyclization activity that produces IGP and AICAR from PRFAR using the ammonia provided by the HisH subunit. The protein is Imidazole glycerol phosphate synthase subunit HisF of Nocardioides sp. (strain ATCC BAA-499 / JS614).